The primary structure comprises 142 residues: MFLGTHSPRLDEKGRIILPAKFREELASGLVLTRGQERCIYVFSEREFGRIHEQMREAPISSKQTRDYIRVFLSGASDEVPDKQGRVTIPPALRAYAGLGRELAVIGAGSRAEIWDAQAWNEYLAEKETSFSETDDAIPGIF.

SpoVT-AbrB domains follow at residues 5–47 (THSP…SERE) and 76–119 (ASDE…DAQA).

Belongs to the MraZ family. In terms of assembly, forms oligomers.

It is found in the cytoplasm. It localises to the nucleoid. The sequence is that of Transcriptional regulator MraZ from Arthrobacter sp. (strain FB24).